We begin with the raw amino-acid sequence, 291 residues long: ATP synthase gamma chain (291 aa).

Belongs to the ATPase gamma chain family. F-type ATPases have 2 components, CF(1) - the catalytic core - and CF(0) - the membrane proton channel. CF(1) has five subunits: alpha(3), beta(3), gamma(1), delta(1), epsilon(1). CF(0) has three main subunits: a, b and c.

Its subcellular location is the cell inner membrane. Produces ATP from ADP in the presence of a proton gradient across the membrane. The gamma chain is believed to be important in regulating ATPase activity and the flow of protons through the CF(0) complex. The polypeptide is ATP synthase gamma chain (Neisseria gonorrhoeae (strain NCCP11945)).